We begin with the raw amino-acid sequence, 819 residues long: Leucine--tRNA ligase (819 aa).

A 'HIGH' region motif is present at residues proline 41–histidine 51. Residues lysine 578–serine 582 carry the 'KMSKS' region motif. ATP is bound at residue lysine 581.

The protein belongs to the class-I aminoacyl-tRNA synthetase family.

It is found in the cytoplasm. It catalyses the reaction tRNA(Leu) + L-leucine + ATP = L-leucyl-tRNA(Leu) + AMP + diphosphate. This is Leucine--tRNA ligase from Fervidobacterium nodosum (strain ATCC 35602 / DSM 5306 / Rt17-B1).